The sequence spans 185 residues: Ribosome-recycling factor (185 aa).

Belongs to the RRF family.

The protein resides in the cytoplasm. Functionally, responsible for the release of ribosomes from messenger RNA at the termination of protein biosynthesis. May increase the efficiency of translation by recycling ribosomes from one round of translation to another. The polypeptide is Ribosome-recycling factor (Geobacillus sp. (strain WCH70)).